Here is a 179-residue protein sequence, read N- to C-terminus: Interleukin-10 (179 aa).

The N-terminal stretch at 1-19 (MPSSSALLCCLVFLAGVAA) is a signal peptide. Disulfide bonds link cysteine 31–cysteine 127 and cysteine 81–cysteine 133. Asparagine 135 carries N-linked (GlcNAc...) asparagine glycosylation.

Belongs to the IL-10 family. Homodimer. Interacts with IL10RA and IL10RB.

Its subcellular location is the secreted. Its function is as follows. Major immune regulatory cytokine that acts on many cells of the immune system where it has profound anti-inflammatory functions, limiting excessive tissue disruption caused by inflammation. Mechanistically, IL10 binds to its heterotetrameric receptor comprising IL10RA and IL10RB leading to JAK1 and STAT2-mediated phosphorylation of STAT3. In turn, STAT3 translocates to the nucleus where it drives expression of anti-inflammatory mediators. Targets antigen-presenting cells (APCs) such as macrophages and monocytes and inhibits their release of pro-inflammatory cytokines including granulocyte-macrophage colony-stimulating factor /GM-CSF, granulocyte colony-stimulating factor/G-CSF, IL-1 alpha, IL-1 beta, IL-6, IL-8 and TNF-alpha. Also interferes with antigen presentation by reducing the expression of MHC-class II and co-stimulatory molecules, thereby inhibiting their ability to induce T cell activation. In addition, controls the inflammatory response of macrophages by reprogramming essential metabolic pathways including mTOR signaling. This Cervus elaphus (Red deer) protein is Interleukin-10 (IL10).